The following is a 235-amino-acid chain: Mediator of RNA polymerase II transcription subunit 29 (235 aa).

Residues 1–14 (MMNQMGMMMQQQGV) are compositionally biased toward low complexity. The disordered stretch occupies residues 1 to 54 (MMNQMGMMMQQQGVGVPGGPGGVGGVGMPGPGGVGVAPGMMQSPQMQQAQQQQV). The segment covering 15 to 36 (GVPGGPGGVGGVGMPGPGGVGV) has biased composition (gly residues). The span at 37–54 (APGMMQSPQMQQAQQQQV) shows a compositional bias: low complexity.

Belongs to the Mediator complex subunit 29 family. In terms of assembly, component of the Mediator complex.

It is found in the nucleus. In terms of biological role, component of the Mediator complex, a coactivator involved in the regulated transcription of nearly all RNA polymerase II-dependent genes. Mediator functions as a bridge to convey information from gene-specific regulatory proteins to the basal RNA polymerase II transcription machinery. Mediator is recruited to promoters by direct interactions with regulatory proteins and serves as a scaffold for the assembly of a functional preinitiation complex with RNA polymerase II and the general transcription factors. The polypeptide is Mediator of RNA polymerase II transcription subunit 29 (ix) (Anopheles gambiae (African malaria mosquito)).